An 88-amino-acid polypeptide reads, in one-letter code: Small integral membrane protein 13 (88 aa).

A helical membrane pass occupies residues 10-30 (LVFVATLLIVLLLMVCGWYFV). A compositionally biased stretch (polar residues) spans 48–60 (TGSQEGDNEQPSG). The tract at residues 48-88 (TGSQEGDNEQPSGSEAEEDPSASPHKMRSARQRRPPVDDGH) is disordered. Phosphoserine occurs at positions 59, 61, and 70. The span at 72-81 (HKMRSARQRR) shows a compositional bias: basic residues.

The protein belongs to the SMIM13 family.

It localises to the membrane. This chain is Small integral membrane protein 13 (Smim13), found in Rattus norvegicus (Rat).